The primary structure comprises 194 residues: CASP-like protein 1B1 (194 aa).

Residues M1 to D24 lie on the Cytoplasmic side of the membrane. Residues W25 to M45 form a helical membrane-spanning segment. The Extracellular portion of the chain corresponds to A46–A77. The chain crosses the membrane as a helical span at residues F78–V98. The Cytoplasmic segment spans residues E99–R111. The helical transmembrane segment at L112–A132 threads the bilayer. The Extracellular segment spans residues A133–G164. The chain crosses the membrane as a helical span at residues V165–I185. The Cytoplasmic segment spans residues T186–I194.

This sequence belongs to the Casparian strip membrane proteins (CASP) family. Homodimer and heterodimers.

It localises to the cell membrane. The protein is CASP-like protein 1B1 of Glycine max (Soybean).